We begin with the raw amino-acid sequence, 600 residues long: Cytidine monophosphate-N-acetylneuraminic acid hydroxylase (600 aa).

The region spanning 9–107 (LSPVEVASLK…VEMDENNRLL (99 aa)) is the Rieske domain. Residues C49, H51, C70, and H73 each contribute to the [2Fe-2S] cluster site.

This sequence belongs to the CMP-Neu5Ac hydroxylase family. [2Fe-2S] cluster is required as a cofactor.

The protein resides in the cytoplasm. The catalysed reaction is CMP-N-acetyl-beta-neuraminate + 2 Fe(II)-[cytochrome b5] + O2 + 2 H(+) = CMP-N-glycoloyl-beta-neuraminate + 2 Fe(III)-[cytochrome b5] + H2O. Its pathway is amino-sugar metabolism; N-acetylneuraminate metabolism. Functionally, sialic acids are components of carbohydrate chains of glycoconjugates and are involved in cell-cell recognition and cell-pathogen interactions. Catalyzes the conversion of CMP-N-acetylneuraminic acid (CMP-Neu5Ac) into its hydroxylated derivative CMP-N-glycolylneuraminic acid (CMP-Neu5Gc), a sialic acid abundantly expressed at the surface of many cells. The sequence is that of Cytidine monophosphate-N-acetylneuraminic acid hydroxylase (CMAH) from Pan paniscus (Pygmy chimpanzee).